Consider the following 296-residue polypeptide: Protease HtpX homolog (296 aa).

2 helical membrane-spanning segments follow: residues 14–34 (VVLL…VGYL) and 39–59 (YQFG…SMIF). H143 lines the Zn(2+) pocket. E144 is an active-site residue. Position 147 (H147) interacts with Zn(2+). The next 2 membrane-spanning stretches (helical) occupy residues 158–178 (IAVA…RMLF) and 195–215 (ILVL…ASLV). E224 is a Zn(2+) binding site.

This sequence belongs to the peptidase M48B family. Requires Zn(2+) as cofactor.

The protein resides in the cell membrane. The chain is Protease HtpX homolog from Streptococcus agalactiae serotype Ia (strain ATCC 27591 / A909 / CDC SS700).